The primary structure comprises 506 residues: Protein NEN3 (506 aa).

Residues 15–176 (FFDLETAVPT…LDDVRMNLEV (162 aa)) form the Exonuclease domain. Positions 17 and 19 each coordinate Mg(2+). The Proton donor/acceptor role is filled by His-164. Asp-169 is a Mg(2+) binding site. Disordered regions lie at residues 204–240 (KSPR…SSVD) and 289–313 (AEEA…KDES). Residues 222–238 (SSTSSSSSPKTDPSSSS) show a composition bias toward low complexity. Residues 290 to 299 (EEAKTVRQQD) show a composition bias toward basic and acidic residues.

The cofactor is Mg(2+).

In terms of biological role, probable exonuclease that may be involved in enuclation of sieve elements. In Arabidopsis thaliana (Mouse-ear cress), this protein is Protein NEN3 (NEN3).